The following is a 129-amino-acid chain: UPF0102 protein Mnod_0024 (129 aa).

Belongs to the UPF0102 family.

In Methylobacterium nodulans (strain LMG 21967 / CNCM I-2342 / ORS 2060), this protein is UPF0102 protein Mnod_0024.